Reading from the N-terminus, the 370-residue chain is Putative 8-amino-7-oxononanoate synthase (370 aa).

Position 20 (arginine 20) interacts with substrate. Pyridoxal 5'-phosphate is bound at residue 95–96 (GY). Residue histidine 120 participates in substrate binding. Residues serine 167, 192–195 (DDAH), and 223–226 (TLSK) each bind pyridoxal 5'-phosphate. Lysine 226 is modified (N6-(pyridoxal phosphate)lysine). Threonine 337 contributes to the substrate binding site.

The protein belongs to the class-II pyridoxal-phosphate-dependent aminotransferase family. BioF subfamily. Homodimer. It depends on pyridoxal 5'-phosphate as a cofactor.

It carries out the reaction 6-carboxyhexanoyl-[ACP] + L-alanine + H(+) = (8S)-8-amino-7-oxononanoate + holo-[ACP] + CO2. It functions in the pathway cofactor biosynthesis; biotin biosynthesis. Catalyzes the decarboxylative condensation of pimeloyl-[acyl-carrier protein] and L-alanine to produce 8-amino-7-oxononanoate (AON), [acyl-carrier protein], and carbon dioxide. The protein is Putative 8-amino-7-oxononanoate synthase (bioF) of Methanococcus vannielii (strain ATCC 35089 / DSM 1224 / JCM 13029 / OCM 148 / SB).